The following is a 466-amino-acid chain: 3-isopropylmalate dehydratase large subunit (466 aa).

Positions 347, 407, and 410 each coordinate [4Fe-4S] cluster.

Belongs to the aconitase/IPM isomerase family. LeuC type 1 subfamily. In terms of assembly, heterodimer of LeuC and LeuD. It depends on [4Fe-4S] cluster as a cofactor.

It catalyses the reaction (2R,3S)-3-isopropylmalate = (2S)-2-isopropylmalate. The protein operates within amino-acid biosynthesis; L-leucine biosynthesis; L-leucine from 3-methyl-2-oxobutanoate: step 2/4. In terms of biological role, catalyzes the isomerization between 2-isopropylmalate and 3-isopropylmalate, via the formation of 2-isopropylmaleate. The chain is 3-isopropylmalate dehydratase large subunit from Klebsiella pneumoniae subsp. pneumoniae (strain ATCC 700721 / MGH 78578).